Reading from the N-terminus, the 400-residue chain is Putative transposase for insertion sequence element IS5376 (400 aa).

One can recognise an HTH IS21-type domain in the interval 5–67 (GEFFMIKEMY…PFKPYLQKRM (63 aa)). Residues 20 to 39 (ISDIARELGIDRKTVRKYIH) constitute a DNA-binding region (H-T-H motif). The segment at 35–55 (RKYIHSPNPPSKSKRKQRKSK) is disordered. The region spanning 113–287 (YETLPGEQMQ…SPQERWAEES (175 aa)) is the Integrase catalytic domain.

It belongs to the transposase IS21/IS408/IS1162 family.

In terms of biological role, involved in the transposition of the insertion sequence. This is Putative transposase for insertion sequence element IS5376 from Geobacillus stearothermophilus (Bacillus stearothermophilus).